The primary structure comprises 171 residues: Large ribosomal subunit protein bL9 (171 aa).

It belongs to the bacterial ribosomal protein bL9 family.

Binds to the 23S rRNA. This chain is Large ribosomal subunit protein bL9, found in Rickettsia conorii (strain ATCC VR-613 / Malish 7).